A 417-amino-acid chain; its full sequence is Signal recognition particle receptor FtsY (417 aa).

GTP is bound by residues 228 to 235, 310 to 314, and 368 to 371; these read GINGTGKT, DTAGR, and TKID.

It belongs to the GTP-binding SRP family. FtsY subfamily. Part of the signal recognition particle protein translocation system, which is composed of SRP and FtsY.

It is found in the cell membrane. The protein localises to the cytoplasm. The catalysed reaction is GTP + H2O = GDP + phosphate + H(+). Its function is as follows. Involved in targeting and insertion of nascent membrane proteins into the cytoplasmic membrane. Acts as a receptor for the complex formed by the signal recognition particle (SRP) and the ribosome-nascent chain (RNC). This is Signal recognition particle receptor FtsY from Methanosarcina acetivorans (strain ATCC 35395 / DSM 2834 / JCM 12185 / C2A).